The following is a 160-amino-acid chain: Nucleotide-binding protein PSHAa2277 (160 aa).

This sequence belongs to the YajQ family.

Its function is as follows. Nucleotide-binding protein. The protein is Nucleotide-binding protein PSHAa2277 of Pseudoalteromonas translucida (strain TAC 125).